The following is a 297-amino-acid chain: NADPH-dependent 1-acyldihydroxyacetone phosphate reductase (297 aa).

Residues 16-20 carry the GXSXG motif; sequence GASGG. The active-site Nucleophile; for lipase activity is the serine 18. Isoleucine 21, aspartate 64, asparagine 93, arginine 126, tyrosine 157, lysine 161, valine 190, and threonine 192 together coordinate NADP(+). Tyrosine 157 functions as the Proton acceptor in the catalytic mechanism. Lysine 161 serves as the catalytic Lowers pKa of active site Tyr.

It belongs to the short-chain dehydrogenases/reductases (SDR) family.

It localises to the lipid droplet. The protein resides in the mitochondrion outer membrane. It is found in the endoplasmic reticulum. The catalysed reaction is a 1-acylglycerone 3-phosphate + NADPH + H(+) = a 1-acyl-sn-glycero-3-phosphate + NADP(+). It catalyses the reaction 1-hexadecanoyl-sn-glycero-3-phosphate + NADP(+) = 1-hexadecanoylglycerone 3-phosphate + NADPH + H(+). The enzyme catalyses a triacylglycerol + H2O = a diacylglycerol + a fatty acid + H(+). It carries out the reaction 1,2,3-tri-(9Z-octadecenoyl)-glycerol + H2O = di-(9Z)-octadecenoylglycerol + (9Z)-octadecenoate + H(+). Its activity is regulated as follows. Inhibited by divalent cations and N-ethylmaleimide. Activity is reduced under anaerobic growth conditions. Can convert acyl and alkyl dihydroxyacetone-phosphate (DHAP) into glycerolipids and ether lipids, respectively. Required for the biosynthesis of phosphatidic acid via the DHAP pathway, where it reduces 1-acyl DHAP to lysophosphatidic acid (LPA). Also has triacylglycerol (TAG) lipase activity. Involved in the mobilization of the non-polar storage lipids triacylglycerols (TAGs) from lipid particles by hydrolysis of TAGs. Required for spore germination. Plays a role in cell wall biogenesis, but this effect may be indirect by affecting the activities of cell wall synthesis enzymes. Lipolysis of TAG by AYR1 is essential for starvation-induced autophagy. Forms an NADPH-regulated cation-selective channel in the mitochondrial outer membrane. The polypeptide is NADPH-dependent 1-acyldihydroxyacetone phosphate reductase (Saccharomyces cerevisiae (strain ATCC 204508 / S288c) (Baker's yeast)).